The sequence spans 485 residues: Glutamyl-tRNA(Gln) amidotransferase subunit A (485 aa).

Residues K79 and S154 each act as charge relay system in the active site. The active-site Acyl-ester intermediate is S178.

The protein belongs to the amidase family. GatA subfamily. Heterotrimer of A, B and C subunits.

The catalysed reaction is L-glutamyl-tRNA(Gln) + L-glutamine + ATP + H2O = L-glutaminyl-tRNA(Gln) + L-glutamate + ADP + phosphate + H(+). Its function is as follows. Allows the formation of correctly charged Gln-tRNA(Gln) through the transamidation of misacylated Glu-tRNA(Gln) in organisms which lack glutaminyl-tRNA synthetase. The reaction takes place in the presence of glutamine and ATP through an activated gamma-phospho-Glu-tRNA(Gln). The protein is Glutamyl-tRNA(Gln) amidotransferase subunit A of Desulforamulus reducens (strain ATCC BAA-1160 / DSM 100696 / MI-1) (Desulfotomaculum reducens).